The sequence spans 179 residues: Large ribosomal subunit protein uL5 (179 aa).

Belongs to the universal ribosomal protein uL5 family. Part of the 50S ribosomal subunit; part of the 5S rRNA/L5/L18/L25 subcomplex. Contacts the 5S rRNA and the P site tRNA. Forms a bridge to the 30S subunit in the 70S ribosome.

Its function is as follows. This is one of the proteins that bind and probably mediate the attachment of the 5S RNA into the large ribosomal subunit, where it forms part of the central protuberance. In the 70S ribosome it contacts protein S13 of the 30S subunit (bridge B1b), connecting the 2 subunits; this bridge is implicated in subunit movement. Contacts the P site tRNA; the 5S rRNA and some of its associated proteins might help stabilize positioning of ribosome-bound tRNAs. The polypeptide is Large ribosomal subunit protein uL5 (Prochlorococcus marinus (strain NATL1A)).